Here is a 272-residue protein sequence, read N- to C-terminus: Large ribosomal subunit protein uL29m (272 aa).

3 disordered regions span residues 1 to 29, 56 to 87, and 227 to 272; these read MAAA…PLTQ, KHRG…PRNK, and AAAT…TPRL. Low complexity predominate over residues 17-29; it reads SSSTPSPLRPLTQ. Composition is skewed to low complexity over residues 227-238 and 249-259; these read AAATEGEQQAAE and PATAATPESAT. A compositionally biased stretch (polar residues) spans 260-272; sequence IPSSQQQTDTPRL.

Belongs to the universal ribosomal protein uL29 family. As to quaternary structure, component of the mitochondrial large ribosomal subunit. Mature mitochondrial ribosomes consist of a small (37S) and a large (54S) subunit. The 37S subunit contains at least 33 different proteins and 1 molecule of RNA (15S). The 54S subunit contains at least 45 different proteins and 1 molecule of RNA (21S).

The protein resides in the mitochondrion. The protein is Large ribosomal subunit protein uL29m (MRPL4) of Chaetomium globosum (strain ATCC 6205 / CBS 148.51 / DSM 1962 / NBRC 6347 / NRRL 1970) (Soil fungus).